The chain runs to 123 residues: UPF0102 protein CLM_2733 (123 aa).

The protein belongs to the UPF0102 family.

The sequence is that of UPF0102 protein CLM_2733 from Clostridium botulinum (strain Kyoto / Type A2).